The sequence spans 340 residues: Aliphatic sulfonates import ATP-binding protein SsuB 1 (340 aa).

A disordered region spans residues 44–72; it reads THHHARVAAQGHARGDAQPPAGALARDDG. In terms of domain architecture, ABC transporter spans 80-299; that stretch reads VQLRGVGKRY…ARASAGFAAL (220 aa). Residue 112–119 coordinates ATP; the sequence is GRSGCGKS.

Belongs to the ABC transporter superfamily. Aliphatic sulfonates importer (TC 3.A.1.17.2) family. The complex is composed of two ATP-binding proteins (SsuB), two transmembrane proteins (SsuC) and a solute-binding protein (SsuA).

It localises to the cell inner membrane. It catalyses the reaction ATP + H2O + aliphatic sulfonate-[sulfonate-binding protein]Side 1 = ADP + phosphate + aliphatic sulfonateSide 2 + [sulfonate-binding protein]Side 1.. Part of the ABC transporter complex SsuABC involved in aliphatic sulfonates import. Responsible for energy coupling to the transport system. This chain is Aliphatic sulfonates import ATP-binding protein SsuB 1, found in Paraburkholderia xenovorans (strain LB400).